Consider the following 231-residue polypeptide: Acyl-protein thioesterase 2 (231 aa).

C2 is lipidated: S-palmitoyl cysteine. The residue at position 82 (S82) is a Phosphoserine. Catalysis depends on charge relay system residues S122, D176, and H210.

Belongs to the AB hydrolase superfamily. AB hydrolase 2 family. Ubiquitous; detected at low levels.

The protein resides in the cytoplasm. It carries out the reaction S-hexadecanoyl-L-cysteinyl-[protein] + H2O = L-cysteinyl-[protein] + hexadecanoate + H(+). The catalysed reaction is prostaglandin E2 1-glyceryl ester + H2O = prostaglandin E2 + glycerol + H(+). The enzyme catalyses 1-hexadecanoyl-sn-glycero-3-phosphocholine + H2O = sn-glycerol 3-phosphocholine + hexadecanoate + H(+). It catalyses the reaction 1-octadecanoyl-sn-glycero-3-phosphocholine + H2O = octadecanoate + sn-glycerol 3-phosphocholine + H(+). It carries out the reaction 1-hexadecanoyl-sn-glycero-3-phosphate + H2O = sn-glycerol 3-phosphate + hexadecanoate + H(+). The catalysed reaction is 1-hexadecanoyl-sn-glycero-3-phospho-L-serine + H2O = sn-glycero-3-phospho-L-serine + hexadecanoate + H(+). Functionally, acts as an acyl-protein thioesterase hydrolyzing fatty acids from S-acylated cysteine residues in proteins such as trimeric G alpha proteins, GSDMD, GAP43, ZDHHC6 or HRAS. Deacylates GAP43. Mediates depalmitoylation of ZDHHC6. Has lysophospholipase activity. Hydrolyzes prostaglandin glycerol esters (PG-Gs). Hydrolyzes PG-Gs in the following order prostaglandin D2-glycerol ester (PGD2-G) &gt; prostaglandin E2 glycerol ester (PGE2-G) &gt; prostaglandin F2-alpha-glycerol ester (PGF2-alpha-G). Hydrolyzes 1-arachidonoylglycerol but not 2-arachidonoylglycerol or arachidonoylethanolamide. The polypeptide is Acyl-protein thioesterase 2 (Lypla2) (Mus musculus (Mouse)).